Here is a 218-residue protein sequence, read N- to C-terminus: MSIGILGKKLGMSQFFDDQGRAIPVTLIEAGPCRITQLKTSDIDGYAAVQIGFGDTREKLINKPSKGHLTKSGEVLLKHLREYRVEGLEGLELGAAITVGSFEAGQKVDVSGDTMGRGFSGYQKRHGFSRGPMSHGSKNHREPGSTGAGTTPGRIYPGKRMAGRYGGKKRTTRGLTILKVDSNRNLLVVKGSVPGKPGALLNIRPAKRVGSKPAQGGK.

The disordered stretch occupies residues 127–167 (GFSRGPMSHGSKNHREPGSTGAGTTPGRIYPGKRMAGRYGG).

The protein belongs to the universal ribosomal protein uL3 family. As to quaternary structure, part of the 50S ribosomal subunit. Forms a cluster with proteins L14 and L19.

One of the primary rRNA binding proteins, it binds directly near the 3'-end of the 23S rRNA, where it nucleates assembly of the 50S subunit. The chain is Large ribosomal subunit protein uL3 from Prochlorococcus marinus (strain MIT 9303).